Here is a 66-residue protein sequence, read N- to C-terminus: Large ribosomal subunit protein bL35 (66 aa).

Composition is skewed to basic residues over residues 1 to 26 and 38 to 48; these read MPKM…KRSH and QKQKRKLRKSA. Positions 1–48 are disordered; sequence MPKMKTHKGAAKRFKKTGSGKLKRSHAFTSHLFANKSQKQKRKLRKSA.

It belongs to the bacterial ribosomal protein bL35 family.

The protein is Large ribosomal subunit protein bL35 of Halalkalibacterium halodurans (strain ATCC BAA-125 / DSM 18197 / FERM 7344 / JCM 9153 / C-125) (Bacillus halodurans).